Consider the following 136-residue polypeptide: uncharacterized protein (136 aa).

This is an uncharacterized protein from Acheta domesticus (House cricket).